The primary structure comprises 59 residues: Antitoxin Rv0909 (59 aa).

Functionally, antitoxin component of a type II toxin-antitoxin (TA) system. Upon expression in M.smegmatis neutralizes the effect of cognate toxin Rv0910. The sequence is that of Antitoxin Rv0909 from Mycobacterium tuberculosis (strain ATCC 25618 / H37Rv).